We begin with the raw amino-acid sequence, 75 residues long: UPF0352 protein VSAL_I1058 (75 aa).

It belongs to the UPF0352 family.

The chain is UPF0352 protein VSAL_I1058 from Aliivibrio salmonicida (strain LFI1238) (Vibrio salmonicida (strain LFI1238)).